The sequence spans 99 residues: Aspartyl/glutamyl-tRNA(Asn/Gln) amidotransferase subunit C (99 aa).

The protein belongs to the GatC family. In terms of assembly, heterotrimer of A, B and C subunits.

It catalyses the reaction L-glutamyl-tRNA(Gln) + L-glutamine + ATP + H2O = L-glutaminyl-tRNA(Gln) + L-glutamate + ADP + phosphate + H(+). It carries out the reaction L-aspartyl-tRNA(Asn) + L-glutamine + ATP + H2O = L-asparaginyl-tRNA(Asn) + L-glutamate + ADP + phosphate + 2 H(+). Allows the formation of correctly charged Asn-tRNA(Asn) or Gln-tRNA(Gln) through the transamidation of misacylated Asp-tRNA(Asn) or Glu-tRNA(Gln) in organisms which lack either or both of asparaginyl-tRNA or glutaminyl-tRNA synthetases. The reaction takes place in the presence of glutamine and ATP through an activated phospho-Asp-tRNA(Asn) or phospho-Glu-tRNA(Gln). This chain is Aspartyl/glutamyl-tRNA(Asn/Gln) amidotransferase subunit C, found in Albidiferax ferrireducens (strain ATCC BAA-621 / DSM 15236 / T118) (Rhodoferax ferrireducens).